A 200-amino-acid polypeptide reads, in one-letter code: 3-isopropylmalate dehydratase small subunit (200 aa).

The protein belongs to the LeuD family. LeuD type 1 subfamily. In terms of assembly, heterodimer of LeuC and LeuD.

The enzyme catalyses (2R,3S)-3-isopropylmalate = (2S)-2-isopropylmalate. The protein operates within amino-acid biosynthesis; L-leucine biosynthesis; L-leucine from 3-methyl-2-oxobutanoate: step 2/4. Functionally, catalyzes the isomerization between 2-isopropylmalate and 3-isopropylmalate, via the formation of 2-isopropylmaleate. The chain is 3-isopropylmalate dehydratase small subunit from Aliivibrio fischeri (strain ATCC 700601 / ES114) (Vibrio fischeri).